We begin with the raw amino-acid sequence, 91 residues long: uncharacterized protein (91 aa).

A signal peptide spans 1 to 20 (MFSRVLALLAVLLLSANTWA).

This sequence belongs to the BhsA/McbA family.

The protein resides in the periplasm. This is an uncharacterized protein from Escherichia coli O157:H7.